Reading from the N-terminus, the 887-residue chain is PAN2-PAN3 deadenylation complex subunit PAN3 (887 aa).

A C3H1-type zinc finger spans residues 43–71 (GVKLKYCRYYAKDKTCFYGEECQFLHEDP). 3 disordered regions span residues 102 to 147 (AVAG…IPGM), 284 to 307 (QTPN…SNVS), and 325 to 392 (SPAT…SGQV). Positions 122 to 138 (PGTGAAAGGGGSSGGLD) are enriched in gly residues. The segment at 147 to 498 (MDGGALTDTS…PPPNRIQKSS (352 aa)) is necessary and sufficient for interaction with PABPC1 but not needed for interaction with PAN2. Positions 284 to 299 (QTPNPTASEFIPKGGS) match the PABPC-interacting motif-2 (PAM-2) motif. A compositionally biased stretch (polar residues) spans 298–307 (GSTSRLSNVS). Ser-354 and Ser-361 each carry phosphoserine. Polar residues predominate over residues 363–392 (TPNPASYMVPSSASTSVNNPVSQTPSSGQV). Residues 463–750 (QIDQADMPAV…SVNDIMPMIG (288 aa)) form a pseudokinase domain region. ATP-binding positions include Arg-521, 570–577 (DFHAGGET), and 644–645 (TK). Residues 751-789 (ARFYTQLDAAQMRNDVIEEDLAKEVQNGRLFRLLAKLGT) adopt a coiled-coil conformation. A knob domain region spans residues 790–887 (INERPEFQKD…ELIAAANGQL (98 aa)).

The protein belongs to the protein kinase superfamily. PAN3 family. As to quaternary structure, homodimer. Forms a heterotrimer with a catalytic subunit PAN2 to form the poly(A)-nuclease (PAN) deadenylation complex. Interacts (via PAM-2 motif) with poly(A)-binding protein PABPC1 (via PABC domain), conferring substrate specificity of the enzyme complex. Interacts with the GW182 family proteins TNRC6A, TNRC6B and TNRC6. Interacts with YTHDF3. In terms of assembly, interacts with PAN2. Interacts (via N-terminus) with PABPC1 at lower efficiency than isoform 3. Interacts with PAN2. Interacts (via N-terminus) with PABPC1 at higher efficiency than isoform 1.

Its subcellular location is the cytoplasm. The protein resides in the P-body. It is found in the nucleus. Its function is as follows. Regulatory subunit of the poly(A)-nuclease (PAN) deadenylation complex, one of two cytoplasmic mRNA deadenylases involved in general and miRNA-mediated mRNA turnover. PAN specifically shortens poly(A) tails of RNA and the activity is stimulated by poly(A)-binding protein (PABP). PAN deadenylation is followed by rapid degradation of the shortened mRNA tails by the CCR4-NOT complex. Deadenylated mRNAs are then degraded by two alternative mechanisms, namely exosome-mediated 3'-5' exonucleolytic degradation, or deadenylation-dependent mRNA decapping and subsequent 5'-3' exonucleolytic degradation by XRN1. PAN3 acts as a regulator for PAN activity, recruiting the catalytic subunit PAN2 to mRNA via its interaction with RNA and PABP, and to miRNA targets via its interaction with GW182 family proteins. In terms of biological role, decreases PAN2-mediated deadenylation, possibly by preventing progression into the second CCR4-NOT mediated stage of biphasic deadenylation. Has a significant effect on mRNA stability, generally stabilizing a subset of the transcriptome. Stabilizes mRNAs degraded by the AU-rich element (ARE)-mediated mRNA decay pathway but promotes degradation of mRNAs by the microRNA-mediated pathway. Its activity influences mRNP remodeling, specifically reducing formation of a subset of P-bodies containing GW220, an isoform of TNRC6A. Functionally, enhances PAN2 deadenylase activity and has an extensive effect on mRNA stability, generally enhancing mRNA decay across the transcriptome by multiple pathways, including the AU-rich element (ARE)-mediated pathway, microRNA-mediated pathway and the nonsense-mediated pathway (NMD). Its activity is required for efficient P-body formation. May be involved in regulating mRNAs of genes involved in cell cycle progression and cell proliferation. In Homo sapiens (Human), this protein is PAN2-PAN3 deadenylation complex subunit PAN3.